A 946-amino-acid chain; its full sequence is Sorting nexin-14 (946 aa).

A run of 2 helical transmembrane segments spans residues 24–44 (ICRQ…ASLL) and 49–69 (IHIL…YCSL). The 175-residue stretch at 130–304 (SSKVDASLSE…LLIIFIDDSP (175 aa)) folds into the PXA domain. In terms of domain architecture, RGS spans 336 to 468 (ELKQIREQQD…CHSDEYFRQL (133 aa)). A Phosphoserine modification is found at S548. Positions 570–690 (PYVDFFEDPS…DFLSPNGGET (121 aa)) constitute a PX domain.

The protein belongs to the sorting nexin family. Widely expressed both in fetal and adult tissues.

It localises to the lysosome membrane. Its subcellular location is the late endosome membrane. It is found in the cell projection. The protein localises to the dendrite. Plays a role in maintaining normal neuronal excitability and synaptic transmission. May be involved in several stages of intracellular trafficking. Required for autophagosome clearance, possibly by mediating the fusion of lysosomes with autophagosomes. Binds phosphatidylinositol 3,5-bisphosphate (PtdIns(3,5)P2), a key component of late endosomes/lysosomes. Does not bind phosphatidylinositol 3-phosphate (PtdIns(3P)). This is Sorting nexin-14 (SNX14) from Homo sapiens (Human).